Reading from the N-terminus, the 104-residue chain is UPF0147 protein MK1586 (104 aa).

The protein belongs to the UPF0147 family.

In Methanopyrus kandleri (strain AV19 / DSM 6324 / JCM 9639 / NBRC 100938), this protein is UPF0147 protein MK1586.